Here is a 409-residue protein sequence, read N- to C-terminus: Peptidase T (409 aa).

His78 contacts Zn(2+). Asp80 is a catalytic residue. A Zn(2+)-binding site is contributed by Asp140. The Proton acceptor role is filled by Glu174. Residues Glu175, Asp197, and His379 each contribute to the Zn(2+) site.

This sequence belongs to the peptidase M20B family. Zn(2+) is required as a cofactor.

It is found in the cytoplasm. The enzyme catalyses Release of the N-terminal residue from a tripeptide.. Functionally, cleaves the N-terminal amino acid of tripeptides. In Aliivibrio salmonicida (strain LFI1238) (Vibrio salmonicida (strain LFI1238)), this protein is Peptidase T.